The following is a 232-amino-acid chain: 7-cyano-7-deazaguanine synthase (232 aa).

8-18 (FSGGQDSTTCL) is an ATP binding site. Positions 189, 198, 201, and 204 each coordinate Zn(2+).

This sequence belongs to the QueC family. Requires Zn(2+) as cofactor.

It carries out the reaction 7-carboxy-7-deazaguanine + NH4(+) + ATP = 7-cyano-7-deazaguanine + ADP + phosphate + H2O + H(+). It participates in purine metabolism; 7-cyano-7-deazaguanine biosynthesis. In terms of biological role, catalyzes the ATP-dependent conversion of 7-carboxy-7-deazaguanine (CDG) to 7-cyano-7-deazaguanine (preQ(0)). The chain is 7-cyano-7-deazaguanine synthase from Photorhabdus laumondii subsp. laumondii (strain DSM 15139 / CIP 105565 / TT01) (Photorhabdus luminescens subsp. laumondii).